A 184-amino-acid polypeptide reads, in one-letter code: Thymidine kinase (184 aa).

ATP is bound by residues 10-17 (GPMYSGKT) and 83-86 (DEVQ). Catalysis depends on E84, which acts as the Proton acceptor. Positions 140, 143, 173, and 176 each coordinate Zn(2+).

It belongs to the thymidine kinase family. As to quaternary structure, homotetramer.

The protein localises to the cytoplasm. It catalyses the reaction thymidine + ATP = dTMP + ADP + H(+). In Thermotoga petrophila (strain ATCC BAA-488 / DSM 13995 / JCM 10881 / RKU-1), this protein is Thymidine kinase.